Consider the following 349-residue polypeptide: Galactose-1-phosphate uridylyltransferase (349 aa).

Residue Arg-29–Arg-32 coordinates UDP-alpha-D-glucose. Zn(2+) is bound by residues Cys-53 and Cys-56. Asn-78–Asp-79 contacts UDP-alpha-D-glucose. His-116 lines the Zn(2+) pocket. UDP-alpha-D-glucose contacts are provided by residues Asn-154 and Gly-160–Ser-162. Residue His-165 coordinates Zn(2+). His-167 functions as the Tele-UMP-histidine intermediate in the catalytic mechanism. Gln-169 serves as a coordination point for UDP-alpha-D-glucose. Glu-183, His-282, His-297, and His-299 together coordinate Fe cation. UDP-alpha-D-glucose-binding positions include Lys-312–Phe-313, Tyr-317–Glu-318, and Gln-324.

The protein belongs to the galactose-1-phosphate uridylyltransferase type 1 family. It depends on Zn(2+) as a cofactor.

The enzyme catalyses alpha-D-galactose 1-phosphate + UDP-alpha-D-glucose = alpha-D-glucose 1-phosphate + UDP-alpha-D-galactose. The protein operates within carbohydrate metabolism; galactose metabolism. The polypeptide is Galactose-1-phosphate uridylyltransferase (galT) (Haemophilus influenzae (strain ATCC 51907 / DSM 11121 / KW20 / Rd)).